A 416-amino-acid chain; its full sequence is Serine hydroxymethyltransferase (416 aa).

Residues leucine 118 and 122-124 (GHL) each bind (6S)-5,6,7,8-tetrahydrofolate. Position 226 is an N6-(pyridoxal phosphate)lysine (lysine 226). Residue glutamate 242 participates in (6S)-5,6,7,8-tetrahydrofolate binding.

Belongs to the SHMT family. In terms of assembly, homodimer. The cofactor is pyridoxal 5'-phosphate.

The protein resides in the cytoplasm. The catalysed reaction is (6R)-5,10-methylene-5,6,7,8-tetrahydrofolate + glycine + H2O = (6S)-5,6,7,8-tetrahydrofolate + L-serine. Its pathway is one-carbon metabolism; tetrahydrofolate interconversion. It participates in amino-acid biosynthesis; glycine biosynthesis; glycine from L-serine: step 1/1. Catalyzes the reversible interconversion of serine and glycine with tetrahydrofolate (THF) serving as the one-carbon carrier. This reaction serves as the major source of one-carbon groups required for the biosynthesis of purines, thymidylate, methionine, and other important biomolecules. Also exhibits THF-independent aldolase activity toward beta-hydroxyamino acids, producing glycine and aldehydes, via a retro-aldol mechanism. The polypeptide is Serine hydroxymethyltransferase (Helicobacter pylori (strain J99 / ATCC 700824) (Campylobacter pylori J99)).